We begin with the raw amino-acid sequence, 224 residues long: uncharacterized protein (224 aa).

This is an uncharacterized protein from Acidianus hospitalis (AFV-1).